A 385-amino-acid chain; its full sequence is MAERPRKRPCGPGEHGQRVEWRKWKQQKKEEKKKWKDLKIMKKLERQRAQEEEAKRQEEEEEAAAQRSNQGRPYTLSVALPGSILDNAQSPELRTYLAGQIARACTIFCVDEIVVFDEEGQDTKSVEGEFRGVGKKGQACVQLARILQYLECPQYLRKAFFPKHQDLQFAGILNPLDSPHHMRQDEESEFREGVVVDRPTKAGHGSLVNCGMKKEVKIDKKLDPGLRVTVRLNQQQLPECKTYKGTVVSSQDPRTKAGLYWGYTVRLASCLSAVFAEAPFQDGYDLTIGTSERGSDVASAQLPSFRHALVVFGGLQGLEAAVDADPNLEVADPSVLFDFYVNTCLSQGSRTIRTEEAILISLAALQPGLTQVGSRPASPLSGPRM.

Disordered regions lie at residues 1–35 (MAER…KKKW) and 47–72 (QRAQ…NQGR). Basic and acidic residues-rich tracts occupy residues 15–35 (HGQR…KKKW) and 47–58 (QRAQEEEAKRQE). Residues Arg-293, Gly-313, Asn-342, and Thr-343 each contribute to the S-adenosyl-L-methionine site.

It belongs to the class IV-like SAM-binding methyltransferase superfamily. In terms of assembly, interacts with INCA1.

It localises to the cytoplasm. It is found in the cytoskeleton. The protein localises to the spindle. Its subcellular location is the chromosome. The protein resides in the centromere. It localises to the kinetochore. It is found in the microtubule organizing center. The protein localises to the centrosome. It catalyses the reaction uridine in 28S rRNA + S-adenosyl-L-methionine = N(3)-methyluridine in 28S rRNA + S-adenosyl-L-homocysteine + H(+). Its function is as follows. S-adenosyl-L-methionine-dependent methyltransferase that specifically methylates the N3 position of a uridine in 28S rRNA. Required for association of the centrosomes with the poles of the bipolar mitotic spindle during metaphase. Also involved in chromosome alignment. May promote centrosome maturation probably by recruiting A-kinase anchor protein AKAP9 to centrosomes in early mitosis. Binds specifically to miRNA MIR145 hairpin, regulates MIR145 expression at a postranscriptional level. The polypeptide is 28S rRNA (uridine-N(3))-methyltransferase (Mus musculus (Mouse)).